The primary structure comprises 166 residues: NAD(P)H-quinone oxidoreductase subunit I, chloroplastic (166 aa).

4Fe-4S ferredoxin-type domains are found at residues 55 to 84 and 95 to 124; these read GRIHFEFDKCIACEVCVRVCPMDLPVVDWK and LNYSIDFGICIFCGNCVEYCPTNCLSMTEE. [4Fe-4S] cluster is bound by residues C64, C67, C70, C74, C104, C107, C110, and C114.

This sequence belongs to the complex I 23 kDa subunit family. In terms of assembly, NDH is composed of at least 16 different subunits, 5 of which are encoded in the nucleus. It depends on [4Fe-4S] cluster as a cofactor.

The protein localises to the plastid. It localises to the chloroplast thylakoid membrane. It carries out the reaction a plastoquinone + NADH + (n+1) H(+)(in) = a plastoquinol + NAD(+) + n H(+)(out). The catalysed reaction is a plastoquinone + NADPH + (n+1) H(+)(in) = a plastoquinol + NADP(+) + n H(+)(out). In terms of biological role, NDH shuttles electrons from NAD(P)H:plastoquinone, via FMN and iron-sulfur (Fe-S) centers, to quinones in the photosynthetic chain and possibly in a chloroplast respiratory chain. The immediate electron acceptor for the enzyme in this species is believed to be plastoquinone. Couples the redox reaction to proton translocation, and thus conserves the redox energy in a proton gradient. This chain is NAD(P)H-quinone oxidoreductase subunit I, chloroplastic, found in Steiractinia sodiroi.